The sequence spans 321 residues: Cytochrome c biogenesis protein CcsA (321 aa).

A run of 7 helical transmembrane segments spans residues 17–37 (IISI…IIGL), 41–61 (LEKG…IRWV), 68–88 (LSNL…IHIF), 143–163 (MLLS…LLVI), 227–247 (IINL…VWAN), 260–277 (ETWA…LHTR), and 288–308 (AIVA…VNLL).

The protein belongs to the CcmF/CycK/Ccl1/NrfE/CcsA family. May interact with Ccs1.

The protein localises to the plastid. It localises to the chloroplast thylakoid membrane. Required during biogenesis of c-type cytochromes (cytochrome c6 and cytochrome f) at the step of heme attachment. The polypeptide is Cytochrome c biogenesis protein CcsA (Piper cenocladum (Ant piper)).